The sequence spans 202 residues: Putative scarecrow-like protein 16 (202 aa).

Residues 1–26 (MQIPTLIDSMANKLHKKPPPLLKLTV) are VHIID. The region spanning 1–202 (MQIPTLIDSM…RVERLEPKSR (202 aa)) is the GRAS domain. Positions 45-82 (ELGSKLVNFATTRNVAMEFRIISSSYSDGLSSLIEQLR) are leucine repeat II (LRII). A PFYRE region spans residues 92 to 184 (LVVNCHMMLH…EADISWKIDN (93 aa)). The interval 187–202 (AKEGAERVERLEPKSR) is SAW.

Belongs to the GRAS family. Expressed in seedlings, leaves and flowers.

It is found in the nucleus. Functionally, probable transcription factor involved in plant development. This Arabidopsis thaliana (Mouse-ear cress) protein is Putative scarecrow-like protein 16 (SCL16).